The sequence spans 238 residues: Probable transcriptional regulatory protein CAB166 (238 aa).

This sequence belongs to the TACO1 family.

The protein resides in the cytoplasm. The polypeptide is Probable transcriptional regulatory protein CAB166 (Chlamydia abortus (strain DSM 27085 / S26/3) (Chlamydophila abortus)).